Consider the following 219-residue polypeptide: Kynurenine formamidase (219 aa).

Residue tryptophan 28 participates in substrate binding. Residues histidine 58, histidine 62, and aspartate 64 each coordinate Zn(2+). Histidine 68 acts as the Proton donor/acceptor in catalysis. Histidine 170 and glutamate 182 together coordinate Zn(2+).

It belongs to the Cyclase 1 superfamily. KynB family. In terms of assembly, homodimer. It depends on Zn(2+) as a cofactor.

The catalysed reaction is N-formyl-L-kynurenine + H2O = L-kynurenine + formate + H(+). It functions in the pathway amino-acid degradation; L-tryptophan degradation via kynurenine pathway; L-kynurenine from L-tryptophan: step 2/2. Catalyzes the hydrolysis of N-formyl-L-kynurenine to L-kynurenine, the second step in the kynurenine pathway of tryptophan degradation. The sequence is that of Kynurenine formamidase from Cupriavidus pinatubonensis (strain JMP 134 / LMG 1197) (Cupriavidus necator (strain JMP 134)).